The chain runs to 178 residues: NADH-quinone oxidoreductase subunit B (178 aa).

[4Fe-4S] cluster is bound by residues cysteine 45, cysteine 46, cysteine 111, and cysteine 140.

This sequence belongs to the complex I 20 kDa subunit family. NDH-1 is composed of 15 different subunits. Subunits NuoB, C, D, E, F, and G constitute the peripheral sector of the complex. Requires [4Fe-4S] cluster as cofactor.

The protein resides in the cell membrane. It carries out the reaction a quinone + NADH + 5 H(+)(in) = a quinol + NAD(+) + 4 H(+)(out). Functionally, NDH-1 shuttles electrons from NADH, via FMN and iron-sulfur (Fe-S) centers, to quinones in the respiratory chain. The immediate electron acceptor for the enzyme in this species is believed to be a menaquinone. Couples the redox reaction to proton translocation (for every two electrons transferred, four hydrogen ions are translocated across the cytoplasmic membrane), and thus conserves the redox energy in a proton gradient. This is NADH-quinone oxidoreductase subunit B from Deinococcus deserti (strain DSM 17065 / CIP 109153 / LMG 22923 / VCD115).